Consider the following 264-residue polypeptide: Glycosylphosphatidylinositol anchor biosynthesis protein 11 (264 aa).

A disordered region spans residues 1–45; sequence MPLVDPVTMSTPSTPAKAMGKSLPNTVKDPSPPPKAGSHTRSPVE. Helical transmembrane passes span 49 to 69, 83 to 103, 132 to 152, 160 to 180, 202 to 222, and 233 to 253; these read NSYY…VLLW, LILP…LPVA, LLSL…MVLF, APHT…PLFY, SVGG…PIPL, and VTVL…GRTL.

This sequence belongs to the PIGF family.

The protein resides in the endoplasmic reticulum membrane. The protein operates within glycolipid biosynthesis; glycosylphosphatidylinositol-anchor biosynthesis. Functionally, acts in the GPI biosynthetic pathway between GlcNAc-PI synthesis and GPI transfer to protein. The sequence is that of Glycosylphosphatidylinositol anchor biosynthesis protein 11 (GPI11) from Pyricularia oryzae (strain 70-15 / ATCC MYA-4617 / FGSC 8958) (Rice blast fungus).